Consider the following 426-residue polypeptide: Serine hydroxymethyltransferase 1 (426 aa).

(6S)-5,6,7,8-tetrahydrofolate is bound by residues L118 and 122–124 (GHL). K227 carries the N6-(pyridoxal phosphate)lysine modification.

Belongs to the SHMT family. Homodimer. It depends on pyridoxal 5'-phosphate as a cofactor.

Its subcellular location is the cytoplasm. The catalysed reaction is (6R)-5,10-methylene-5,6,7,8-tetrahydrofolate + glycine + H2O = (6S)-5,6,7,8-tetrahydrofolate + L-serine. It participates in one-carbon metabolism; tetrahydrofolate interconversion. It functions in the pathway amino-acid biosynthesis; glycine biosynthesis; glycine from L-serine: step 1/1. Catalyzes the reversible interconversion of serine and glycine with tetrahydrofolate (THF) serving as the one-carbon carrier. This reaction serves as the major source of one-carbon groups required for the biosynthesis of purines, thymidylate, methionine, and other important biomolecules. Also exhibits THF-independent aldolase activity toward beta-hydroxyamino acids, producing glycine and aldehydes, via a retro-aldol mechanism. This is Serine hydroxymethyltransferase 1 from Mycobacterium bovis (strain ATCC BAA-935 / AF2122/97).